A 341-amino-acid chain; its full sequence is HTH-type transcriptional repressor PurR (341 aa).

The region spanning 2 to 56 is the HTH lacI-type domain; sequence ATIKDVAKRANVSTTTVSHVINKTRFVAEETRNAVWAAIKELHYSPSAVARSLKV. Residues 4 to 23 constitute a DNA-binding region (H-T-H motif); it reads IKDVAKRANVSTTTVSHVIN. The DNA-binding element occupies 48 to 56; the sequence is SAVARSLKV. Hypoxanthine contacts are provided by Tyr73, Arg190, Thr192, Phe221, and Asp275.

Homodimer.

The protein operates within purine metabolism; purine nucleotide biosynthesis [regulation]. Is the main repressor of the genes involved in the de novo synthesis of purine nucleotides, regulating purB, purC, purEK, purF, purHD, purL, purMN and guaBA expression. PurR is allosterically activated to bind its cognate DNA by binding the purine corepressors, hypoxanthine or guanine, thereby effecting transcription repression. The sequence is that of HTH-type transcriptional repressor PurR from Salmonella typhi.